The chain runs to 145 residues: Immunity protein CdiI (145 aa).

In terms of assembly, interacts with cognate toxin fragment CdiA-CT.

Immunity protein component of a toxin-immunity protein module, which functions as a cellular contact-dependent growth inhibition (CDI) system. CDI modules allow bacteria to communicate with and inhibit the growth of closely related neighboring bacteria in a contact-dependent fashion. Protects cells against the 16S rRNase activity of CdiA-CT, its cognate toxin protein, but not against the toxic effects of a similar rRNase, non-cognate CdiA-CT from E.chrysanthemi strain EC16. The sequence is that of Immunity protein CdiI from Enterobacter cloacae subsp. cloacae (strain ATCC 13047 / DSM 30054 / NBRC 13535 / NCTC 10005 / WDCM 00083 / NCDC 279-56).